Reading from the N-terminus, the 265-residue chain is 4-hydroxy-2-oxo-heptane-1,7-dioate aldolase (265 aa).

The Proton acceptor role is filled by His45. Residue Gln147 coordinates substrate. An a divalent metal cation-binding site is contributed by Glu149. Residues Ala174 and Asp175 each contribute to the substrate site. Asp175 is an a divalent metal cation binding site.

This sequence belongs to the HpcH/HpaI aldolase family. In terms of assembly, homohexamer; trimer of dimers. Requires a divalent metal cation as cofactor.

It carries out the reaction 4-hydroxy-2-oxoheptanedioate = succinate semialdehyde + pyruvate. It participates in aromatic compound metabolism; 4-hydroxyphenylacetate degradation; pyruvate and succinate semialdehyde from 4-hydroxyphenylacetate: step 7/7. Functionally, catalyzes the reversible retro-aldol cleavage of 4-hydroxy-2-ketoheptane-1,7-dioate (HKHD) to pyruvate and succinic semialdehyde. The protein is 4-hydroxy-2-oxo-heptane-1,7-dioate aldolase of Klebsiella pneumoniae subsp. pneumoniae (strain ATCC 700721 / MGH 78578).